The sequence spans 428 residues: Maltoporin (428 aa).

A signal peptide spans 1 to 24 (MTTLRKLPIALAVAAGVLSTQAMA).

This sequence belongs to the porin LamB (TC 1.B.3) family. As to quaternary structure, homotrimer formed of three 18-stranded antiparallel beta-barrels, containing three independent channels.

The protein resides in the cell outer membrane. It carries out the reaction beta-maltose(in) = beta-maltose(out). Functionally, involved in the transport of maltose and maltodextrins. The sequence is that of Maltoporin from Yersinia enterocolitica serotype O:8 / biotype 1B (strain NCTC 13174 / 8081).